Reading from the N-terminus, the 364-residue chain is SH3 and cysteine-rich domain-containing protein 3 (364 aa).

Disordered regions lie at residues 1-89 (MTEK…NDKP) and 189-244 (NKER…HKQP). Positions 64–78 (YEEEEEEEEEEEEPP) are enriched in acidic residues. A Phorbol-ester/DAG-type zinc finger spans residues 89 to 140 (PHKFKDHFFKKPKFCDVCARMIVLNNKFGLRCKNCKTNIHEHCQSYVEMQRC). The span at 212–242 (ESARPEEGKPQDGNPEGDKKAEKKTPDDKHK) shows a compositional bias: basic and acidic residues. SH3 domains are found at residues 247–306 (QQSH…RVRA) and 307–364 (GERV…LEEI).

In terms of assembly, interacts (via SH3 domains) with the calcium channels CACNA1S and CACNA1C. Component of a calcium channel complex with CACNA1S and CACNB1. Component of a calcium channel complex with CACNA1C and CACNB1.

It localises to the cytoplasm. Its subcellular location is the cell membrane. It is found in the sarcolemma. The protein resides in the T-tubule. Functionally, required for normal excitation-contraction coupling in skeletal muscle and for normal muscle contraction in response to membrane depolarization. Required for normal Ca(2+) release from the sarcplasmic reticulum, which ultimately leads to muscle contraction. Probably functions via its effects on muscle calcium channels. Increases CACNA1S channel activity, in addition to its role in enhancing the expression of CACNA1S at the cell membrane. Has a redundant role in promoting the expression of the calcium channel CACNA1S at the cell membrane. Slows down the inactivation rate of the calcium channel CACNA1C. This Homo sapiens (Human) protein is SH3 and cysteine-rich domain-containing protein 3 (STAC3).